The primary structure comprises 157 residues: RxLR effector protein PITG_04049 (157 aa).

The N-terminal stretch at Met1 to Ser23 is a signal peptide. The short motif at Gln51 to Arg65 is the RxLR-dEER element.

Belongs to the RxLR effector family.

It localises to the secreted. The protein resides in the host cytoplasm. The protein localises to the host nucleus. Effector that might be involved in host plant infection. In Phytophthora infestans (strain T30-4) (Potato late blight agent), this protein is RxLR effector protein PITG_04049.